A 208-amino-acid polypeptide reads, in one-letter code: N-(5'-phosphoribosyl)anthranilate isomerase (208 aa).

Belongs to the TrpF family.

It carries out the reaction N-(5-phospho-beta-D-ribosyl)anthranilate = 1-(2-carboxyphenylamino)-1-deoxy-D-ribulose 5-phosphate. Its pathway is amino-acid biosynthesis; L-tryptophan biosynthesis; L-tryptophan from chorismate: step 3/5. This chain is N-(5'-phosphoribosyl)anthranilate isomerase, found in Methanothrix thermoacetophila (strain DSM 6194 / JCM 14653 / NBRC 101360 / PT) (Methanosaeta thermophila).